A 120-amino-acid chain; its full sequence is Ribosome-binding factor A (120 aa).

The protein belongs to the RbfA family. As to quaternary structure, monomer. Binds 30S ribosomal subunits, but not 50S ribosomal subunits or 70S ribosomes.

The protein localises to the cytoplasm. One of several proteins that assist in the late maturation steps of the functional core of the 30S ribosomal subunit. Associates with free 30S ribosomal subunits (but not with 30S subunits that are part of 70S ribosomes or polysomes). Required for efficient processing of 16S rRNA. May interact with the 5'-terminal helix region of 16S rRNA. In Clostridium botulinum (strain ATCC 19397 / Type A), this protein is Ribosome-binding factor A.